We begin with the raw amino-acid sequence, 308 residues long: UDP-N-acetylenolpyruvoylglucosamine reductase (308 aa).

The FAD-binding PCMH-type domain occupies 37–201; that stretch reads RVGGPAQVLF…TQATFRGTPG (165 aa). Residue R181 is part of the active site. Polar residues predominate over residues 216-233; the sequence is SREATQPIKSRTGGSTFK. Positions 216 to 236 are disordered; that stretch reads SREATQPIKSRTGGSTFKNPP. The active-site Proton donor is S230. The active site involves E300.

This sequence belongs to the MurB family. Requires FAD as cofactor.

Its subcellular location is the cytoplasm. It catalyses the reaction UDP-N-acetyl-alpha-D-muramate + NADP(+) = UDP-N-acetyl-3-O-(1-carboxyvinyl)-alpha-D-glucosamine + NADPH + H(+). The protein operates within cell wall biogenesis; peptidoglycan biosynthesis. Its function is as follows. Cell wall formation. The polypeptide is UDP-N-acetylenolpyruvoylglucosamine reductase (Azorhizobium caulinodans (strain ATCC 43989 / DSM 5975 / JCM 20966 / LMG 6465 / NBRC 14845 / NCIMB 13405 / ORS 571)).